The following is a 514-amino-acid chain: Peptide chain release factor 3 (514 aa).

Positions 8 to 268 (KKRRTFAIIS…TFLKFAPEPH (261 aa)) constitute a tr-type G domain. Residues 17–24 (SHPDAGKT), 85–89 (DTPGH), and 139–142 (NKLD) contribute to the GTP site.

The protein belongs to the TRAFAC class translation factor GTPase superfamily. Classic translation factor GTPase family. PrfC subfamily.

It localises to the cytoplasm. In terms of biological role, increases the formation of ribosomal termination complexes and stimulates activities of RF-1 and RF-2. It binds guanine nucleotides and has strong preference for UGA stop codons. It may interact directly with the ribosome. The stimulation of RF-1 and RF-2 is significantly reduced by GTP and GDP, but not by GMP. This chain is Peptide chain release factor 3, found in Streptococcus sanguinis (strain SK36).